Consider the following 160-residue polypeptide: MAPK regulated corepressor interacting protein 2 (160 aa).

Methionine 1 is subject to N-acetylmethionine. The interval 1-22 (MYTITKGPSKLVAQRRTGPTQQ) is disordered. Arginine 35 is modified (omega-N-methylarginine). The disordered stretch occupies residues 43 to 64 (LPAHLQPSAQTQGPWPLASSGP). Serine 61 bears the Phosphoserine mark. Position 65 is an omega-N-methylarginine (arginine 65). Residue serine 82 is modified to Phosphoserine.

The protein belongs to the MCRIP family. As to quaternary structure, interacts with DDX6. Interacts with MCRIP1.

The protein localises to the cytoplasm. The protein resides in the stress granule. It is found in the nucleus. This chain is MAPK regulated corepressor interacting protein 2 (Mcrip2), found in Mus musculus (Mouse).